We begin with the raw amino-acid sequence, 1158 residues long: ATP-dependent helicase/deoxyribonuclease subunit B (1158 aa).

An ATP-binding site is contributed by 8-15; it reads GRAGTGKS. [4Fe-4S] cluster contacts are provided by C791, C1112, C1115, and C1121.

The protein belongs to the helicase family. AddB/RexB type 1 subfamily. Heterodimer of AddA and AddB. It depends on Mg(2+) as a cofactor. [4Fe-4S] cluster is required as a cofactor.

Functionally, the heterodimer acts as both an ATP-dependent DNA helicase and an ATP-dependent, dual-direction single-stranded exonuclease. Recognizes the chi site generating a DNA molecule suitable for the initiation of homologous recombination. The AddB subunit has 5' -&gt; 3' nuclease activity but not helicase activity. The protein is ATP-dependent helicase/deoxyribonuclease subunit B of Clostridium perfringens (strain ATCC 13124 / DSM 756 / JCM 1290 / NCIMB 6125 / NCTC 8237 / Type A).